We begin with the raw amino-acid sequence, 327 residues long: Phenylalanine--tRNA ligase alpha subunit (327 aa).

Mg(2+) is bound at residue Glu252.

The protein belongs to the class-II aminoacyl-tRNA synthetase family. Phe-tRNA synthetase alpha subunit type 1 subfamily. In terms of assembly, tetramer of two alpha and two beta subunits. It depends on Mg(2+) as a cofactor.

Its subcellular location is the cytoplasm. It catalyses the reaction tRNA(Phe) + L-phenylalanine + ATP = L-phenylalanyl-tRNA(Phe) + AMP + diphosphate + H(+). In Vibrio parahaemolyticus serotype O3:K6 (strain RIMD 2210633), this protein is Phenylalanine--tRNA ligase alpha subunit.